A 660-amino-acid chain; its full sequence is DNA mismatch repair protein MutL (660 aa).

2 disordered regions span residues 368-426 (PQQT…PTKK) and 439-461 (NREQRESTSQVNEQSHTFRSTQQ). Residues 406–417 (SSSSNSTAPSRS) show a composition bias toward low complexity.

It belongs to the DNA mismatch repair MutL/HexB family.

Functionally, this protein is involved in the repair of mismatches in DNA. It is required for dam-dependent methyl-directed DNA mismatch repair. May act as a 'molecular matchmaker', a protein that promotes the formation of a stable complex between two or more DNA-binding proteins in an ATP-dependent manner without itself being part of a final effector complex. The protein is DNA mismatch repair protein MutL of Aliivibrio fischeri (strain ATCC 700601 / ES114) (Vibrio fischeri).